The sequence spans 156 residues: Small ribosomal subunit protein uS7 (156 aa).

This sequence belongs to the universal ribosomal protein uS7 family. In terms of assembly, part of the 30S ribosomal subunit. Contacts proteins S9 and S11.

One of the primary rRNA binding proteins, it binds directly to 16S rRNA where it nucleates assembly of the head domain of the 30S subunit. Is located at the subunit interface close to the decoding center, probably blocks exit of the E-site tRNA. This Allorhizobium ampelinum (strain ATCC BAA-846 / DSM 112012 / S4) (Agrobacterium vitis (strain S4)) protein is Small ribosomal subunit protein uS7.